A 213-amino-acid polypeptide reads, in one-letter code: Cytochrome c biogenesis ATP-binding export protein CcmA (213 aa).

The ABC transporter domain maps to 11-213 (LTARNLECIR…TVTVHHLVLS (203 aa)). 43-50 (GPNGSGKT) contributes to the ATP binding site.

This sequence belongs to the ABC transporter superfamily. CcmA exporter (TC 3.A.1.107) family. As to quaternary structure, the complex is composed of two ATP-binding proteins (CcmA) and two transmembrane proteins (CcmB).

It is found in the cell inner membrane. It catalyses the reaction heme b(in) + ATP + H2O = heme b(out) + ADP + phosphate + H(+). In terms of biological role, part of the ABC transporter complex CcmAB involved in the biogenesis of c-type cytochromes; once thought to export heme, this seems not to be the case, but its exact role is uncertain. Responsible for energy coupling to the transport system. This is Cytochrome c biogenesis ATP-binding export protein CcmA from Nitrosomonas europaea (strain ATCC 19718 / CIP 103999 / KCTC 2705 / NBRC 14298).